The following is a 347-amino-acid chain: S-adenosylmethionine:tRNA ribosyltransferase-isomerase (347 aa).

The protein belongs to the QueA family. Monomer.

The protein localises to the cytoplasm. It carries out the reaction 7-aminomethyl-7-carbaguanosine(34) in tRNA + S-adenosyl-L-methionine = epoxyqueuosine(34) in tRNA + adenine + L-methionine + 2 H(+). It participates in tRNA modification; tRNA-queuosine biosynthesis. Transfers and isomerizes the ribose moiety from AdoMet to the 7-aminomethyl group of 7-deazaguanine (preQ1-tRNA) to give epoxyqueuosine (oQ-tRNA). The protein is S-adenosylmethionine:tRNA ribosyltransferase-isomerase of Xylella fastidiosa (strain M23).